A 111-amino-acid polypeptide reads, in one-letter code: Anti-adapter protein IraM (111 aa).

It belongs to the IraM/RssC family.

The protein resides in the cytoplasm. Inhibits RpoS proteolysis by regulating RssB activity, thereby increasing the stability of the sigma stress factor RpoS during magnesium starvation. This chain is Anti-adapter protein IraM, found in Escherichia coli O127:H6 (strain E2348/69 / EPEC).